A 457-amino-acid polypeptide reads, in one-letter code: Argininosuccinate lyase (457 aa).

The protein belongs to the lyase 1 family. Argininosuccinate lyase subfamily.

The protein localises to the cytoplasm. The enzyme catalyses 2-(N(omega)-L-arginino)succinate = fumarate + L-arginine. Its pathway is amino-acid biosynthesis; L-arginine biosynthesis; L-arginine from L-ornithine and carbamoyl phosphate: step 3/3. The polypeptide is Argininosuccinate lyase (Escherichia coli O127:H6 (strain E2348/69 / EPEC)).